The chain runs to 476 residues: Membrane-bound lytic murein transglycosylase F (476 aa).

Residues M1 to V22 form the signal peptide. Residues D23–V257 are non-LT domain. Positions K258–K476 are LT domain. The active site involves E302. A disordered region spans residues S446–K476. Acidic residues predominate over residues P451–S460.

It in the N-terminal section; belongs to the bacterial solute-binding protein 3 family. In the C-terminal section; belongs to the transglycosylase Slt family.

The protein resides in the cell outer membrane. The enzyme catalyses Exolytic cleavage of the (1-&gt;4)-beta-glycosidic linkage between N-acetylmuramic acid (MurNAc) and N-acetylglucosamine (GlcNAc) residues in peptidoglycan, from either the reducing or the non-reducing ends of the peptidoglycan chains, with concomitant formation of a 1,6-anhydrobond in the MurNAc residue.. Murein-degrading enzyme that degrades murein glycan strands and insoluble, high-molecular weight murein sacculi, with the concomitant formation of a 1,6-anhydromuramoyl product. Lytic transglycosylases (LTs) play an integral role in the metabolism of the peptidoglycan (PG) sacculus. Their lytic action creates space within the PG sacculus to allow for its expansion as well as for the insertion of various structures such as secretion systems and flagella. The chain is Membrane-bound lytic murein transglycosylase F from Shewanella baltica (strain OS155 / ATCC BAA-1091).